A 441-amino-acid polypeptide reads, in one-letter code: G2/mitotic-specific cyclin-2 (441 aa).

It belongs to the cyclin family. Cyclin AB subfamily. In terms of assembly, interacts with the CDC2 and CDK2 protein kinases to form a serine/threonine kinase holoenzyme complex. The cyclin subunit imparts substrate specificity to the complex.

Essential for the control of the cell cycle at the G2/M (mitosis) transition. G2/M cyclins accumulate steadily during G2 and are abruptly destroyed at mitosis. The polypeptide is G2/mitotic-specific cyclin-2 (Antirrhinum majus (Garden snapdragon)).